Here is a 161-residue protein sequence, read N- to C-terminus: Ubiquitin-conjugating enzyme 15 (161 aa).

One can recognise a UBC core domain in the interval I15–V161. Residue C99 is the Glycyl thioester intermediate of the active site.

The protein belongs to the ubiquitin-conjugating enzyme family.

It catalyses the reaction S-ubiquitinyl-[E1 ubiquitin-activating enzyme]-L-cysteine + [E2 ubiquitin-conjugating enzyme]-L-cysteine = [E1 ubiquitin-activating enzyme]-L-cysteine + S-ubiquitinyl-[E2 ubiquitin-conjugating enzyme]-L-cysteine.. The protein operates within protein modification; protein ubiquitination. In terms of biological role, accepts the ubiquitin from the E1 complex and catalyzes its covalent attachment to other proteins. The sequence is that of Ubiquitin-conjugating enzyme 15 (UBC15) from Arabidopsis thaliana (Mouse-ear cress).